A 104-amino-acid chain; its full sequence is uncharacterized protein (104 aa).

The segment at 62 to 92 (SSPAASSHPRKRGKEKKERTPTERLAAPARK) is disordered.

This is an uncharacterized protein from Human adenovirus B serotype 7 (HAdV-7).